We begin with the raw amino-acid sequence, 195 residues long: Probable septum site-determining protein MinC (195 aa).

Belongs to the MinC family. In terms of assembly, interacts with MinD and FtsZ.

Functionally, cell division inhibitor that blocks the formation of polar Z ring septums. Rapidly oscillates between the poles of the cell to destabilize FtsZ filaments that have formed before they mature into polar Z rings. Prevents FtsZ polymerization. The chain is Probable septum site-determining protein MinC from Helicobacter pylori (strain P12).